The primary structure comprises 485 residues: D-alanine--D-alanyl carrier protein ligase (485 aa).

144-145 (TS) is an ATP binding site. D189 provides a ligand contact to D-alanine. 284-289 (NTYGPT) serves as a coordination point for ATP. V293 contributes to the D-alanine binding site. Residues D365 and K473 each coordinate ATP. K473 serves as a coordination point for D-alanine.

Belongs to the ATP-dependent AMP-binding enzyme family. DltA subfamily.

It is found in the cytoplasm. It carries out the reaction holo-[D-alanyl-carrier protein] + D-alanine + ATP = D-alanyl-[D-alanyl-carrier protein] + AMP + diphosphate. It functions in the pathway cell wall biogenesis; lipoteichoic acid biosynthesis. Its function is as follows. Catalyzes the first step in the D-alanylation of lipoteichoic acid (LTA), the activation of D-alanine and its transfer onto the D-alanyl carrier protein (Dcp) DltC. In an ATP-dependent two-step reaction, forms a high energy D-alanyl-AMP intermediate, followed by transfer of the D-alanyl residue as a thiol ester to the phosphopantheinyl prosthetic group of the Dcp. D-alanylation of LTA plays an important role in modulating the properties of the cell wall in Gram-positive bacteria, influencing the net charge of the cell wall. The polypeptide is D-alanine--D-alanyl carrier protein ligase (Staphylococcus aureus (strain MRSA252)).